A 248-amino-acid chain; its full sequence is Pyridoxine 5'-phosphate synthase (248 aa).

3-amino-2-oxopropyl phosphate is bound by residues Asn8 and Arg19. Residue His44 is the Proton acceptor of the active site. The 1-deoxy-D-xylulose 5-phosphate site is built by Arg46 and His51. Glu76 (proton acceptor) is an active-site residue. 1-deoxy-D-xylulose 5-phosphate is bound at residue Thr106. The active-site Proton donor is the His200. 3-amino-2-oxopropyl phosphate-binding positions include Asp201 and 223-224 (GH).

The protein belongs to the PNP synthase family. As to quaternary structure, homooctamer; tetramer of dimers.

It localises to the cytoplasm. The catalysed reaction is 3-amino-2-oxopropyl phosphate + 1-deoxy-D-xylulose 5-phosphate = pyridoxine 5'-phosphate + phosphate + 2 H2O + H(+). It participates in cofactor biosynthesis; pyridoxine 5'-phosphate biosynthesis; pyridoxine 5'-phosphate from D-erythrose 4-phosphate: step 5/5. Its function is as follows. Catalyzes the complicated ring closure reaction between the two acyclic compounds 1-deoxy-D-xylulose-5-phosphate (DXP) and 3-amino-2-oxopropyl phosphate (1-amino-acetone-3-phosphate or AAP) to form pyridoxine 5'-phosphate (PNP) and inorganic phosphate. This is Pyridoxine 5'-phosphate synthase from Chelativorans sp. (strain BNC1).